The primary structure comprises 293 residues: Shikimate dehydrogenase (NADP(+)) (293 aa).

Residues 26 to 28 and Thr-73 each bind shikimate; that span reads SKS. The active-site Proton acceptor is Lys-77. Glu-89 is a binding site for NADP(+). Asn-98 and Asp-113 together coordinate shikimate. NADP(+) is bound by residues 137-141, 161-166, and Ile-231; these read GAGGA and NRTRQR. Tyr-233 contacts shikimate. Gly-254 contacts NADP(+).

It belongs to the shikimate dehydrogenase family. As to quaternary structure, homodimer.

It catalyses the reaction shikimate + NADP(+) = 3-dehydroshikimate + NADPH + H(+). It participates in metabolic intermediate biosynthesis; chorismate biosynthesis; chorismate from D-erythrose 4-phosphate and phosphoenolpyruvate: step 4/7. Involved in the biosynthesis of the chorismate, which leads to the biosynthesis of aromatic amino acids. Catalyzes the reversible NADPH linked reduction of 3-dehydroshikimate (DHSA) to yield shikimate (SA). The sequence is that of Shikimate dehydrogenase (NADP(+)) from Bartonella quintana (strain Toulouse) (Rochalimaea quintana).